Reading from the N-terminus, the 468-residue chain is 6-phosphogluconate dehydrogenase, decarboxylating (468 aa).

Residues 9–14 (GLAVMG), 32–34 (NRS), 73–75 (VKA), and Asn101 contribute to the NADP(+) site. Substrate contacts are provided by residues Asn101 and 127 to 129 (SGG). The Proton acceptor role is filled by Lys182. 185–186 (HN) is a binding site for substrate. Glu189 serves as the catalytic Proton donor. Substrate contacts are provided by Tyr190, Lys259, Arg286, Arg444, and His450.

Belongs to the 6-phosphogluconate dehydrogenase family. In terms of assembly, homodimer.

The enzyme catalyses 6-phospho-D-gluconate + NADP(+) = D-ribulose 5-phosphate + CO2 + NADPH. It functions in the pathway carbohydrate degradation; pentose phosphate pathway; D-ribulose 5-phosphate from D-glucose 6-phosphate (oxidative stage): step 3/3. Catalyzes the oxidative decarboxylation of 6-phosphogluconate to ribulose 5-phosphate and CO(2), with concomitant reduction of NADP to NADPH. The polypeptide is 6-phosphogluconate dehydrogenase, decarboxylating (gnd) (Staphylococcus epidermidis (strain ATCC 35984 / DSM 28319 / BCRC 17069 / CCUG 31568 / BM 3577 / RP62A)).